A 347-amino-acid polypeptide reads, in one-letter code: Probable dual-specificity RNA methyltransferase RlmN (347 aa).

Residue Glu-93 is the Proton acceptor of the active site. The Radical SAM core domain occupies 99–333 (TEKRLTACLS…VSLRKSRGLD (235 aa)). Cys-106 and Cys-338 form a disulfide bridge. The [4Fe-4S] cluster site is built by Cys-113, Cys-117, and Cys-120. Residues 160–161 (GE), Ser-190, 219–221 (SLH), and Asn-295 contribute to the S-adenosyl-L-methionine site. The active-site S-methylcysteine intermediate is the Cys-338.

It belongs to the radical SAM superfamily. RlmN family. Requires [4Fe-4S] cluster as cofactor.

It localises to the cytoplasm. The catalysed reaction is adenosine(2503) in 23S rRNA + 2 reduced [2Fe-2S]-[ferredoxin] + 2 S-adenosyl-L-methionine = 2-methyladenosine(2503) in 23S rRNA + 5'-deoxyadenosine + L-methionine + 2 oxidized [2Fe-2S]-[ferredoxin] + S-adenosyl-L-homocysteine. It carries out the reaction adenosine(37) in tRNA + 2 reduced [2Fe-2S]-[ferredoxin] + 2 S-adenosyl-L-methionine = 2-methyladenosine(37) in tRNA + 5'-deoxyadenosine + L-methionine + 2 oxidized [2Fe-2S]-[ferredoxin] + S-adenosyl-L-homocysteine. Its function is as follows. Specifically methylates position 2 of adenine 2503 in 23S rRNA and position 2 of adenine 37 in tRNAs. The polypeptide is Probable dual-specificity RNA methyltransferase RlmN (Prochlorococcus marinus (strain MIT 9301)).